The sequence spans 154 residues: Transcriptional repressor NrdR (154 aa).

Residues 3 to 34 fold into a zinc finger; sequence CPFCGANDTKVIDSRLVAEGEQVRRRRECLAC. Residues 49–139 enclose the ATP-cone domain; that stretch reads PRLIKTDGSR…VYRRFQDLNE (91 aa).

The protein belongs to the NrdR family. It depends on Zn(2+) as a cofactor.

Negatively regulates transcription of bacterial ribonucleotide reductase nrd genes and operons by binding to NrdR-boxes. This is Transcriptional repressor NrdR from Pseudomonas fluorescens (strain Pf0-1).